The sequence spans 75 residues: uncharacterized protein (75 aa).

Residues 1-26 (MQFLERHFSVLFPVLFFFSFYPISFA) form the signal peptide.

It is found in the secreted. This is an uncharacterized protein from Schizosaccharomyces pombe (strain 972 / ATCC 24843) (Fission yeast).